Here is a 137-residue protein sequence, read N- to C-terminus: Large ribosomal subunit protein uL16 (137 aa).

The protein belongs to the universal ribosomal protein uL16 family. In terms of assembly, part of the 50S ribosomal subunit.

Binds 23S rRNA and is also seen to make contacts with the A and possibly P site tRNAs. This chain is Large ribosomal subunit protein uL16, found in Acinetobacter baumannii (strain AB307-0294).